The following is a 202-amino-acid chain: NADH-quinone oxidoreductase subunit B (202 aa).

Positions 1–13 (MSSPTTKFSNAAS) are enriched in polar residues. Positions 1 to 32 (MSSPTTKFSNAASSAGGPRVTPAAASILDPRT) are disordered. Cys81, Cys82, Cys146, and Cys176 together coordinate [4Fe-4S] cluster.

It belongs to the complex I 20 kDa subunit family. NDH-1 is composed of 14 different subunits. Subunits NuoB, C, D, E, F, and G constitute the peripheral sector of the complex. [4Fe-4S] cluster is required as a cofactor.

The protein resides in the cell inner membrane. It carries out the reaction a quinone + NADH + 5 H(+)(in) = a quinol + NAD(+) + 4 H(+)(out). In terms of biological role, NDH-1 shuttles electrons from NADH, via FMN and iron-sulfur (Fe-S) centers, to quinones in the respiratory chain. The immediate electron acceptor for the enzyme in this species is believed to be ubiquinone. Couples the redox reaction to proton translocation (for every two electrons transferred, four hydrogen ions are translocated across the cytoplasmic membrane), and thus conserves the redox energy in a proton gradient. This Nitrobacter hamburgensis (strain DSM 10229 / NCIMB 13809 / X14) protein is NADH-quinone oxidoreductase subunit B.